Reading from the N-terminus, the 213-residue chain is Imidazole glycerol phosphate synthase subunit HisH (213 aa).

The 211-residue stretch at Met3–Gly213 folds into the Glutamine amidotransferase type-1 domain. The active-site Nucleophile is Cys81. Catalysis depends on residues His188 and Glu190.

In terms of assembly, heterodimer of HisH and HisF.

It localises to the cytoplasm. It catalyses the reaction 5-[(5-phospho-1-deoxy-D-ribulos-1-ylimino)methylamino]-1-(5-phospho-beta-D-ribosyl)imidazole-4-carboxamide + L-glutamine = D-erythro-1-(imidazol-4-yl)glycerol 3-phosphate + 5-amino-1-(5-phospho-beta-D-ribosyl)imidazole-4-carboxamide + L-glutamate + H(+). It carries out the reaction L-glutamine + H2O = L-glutamate + NH4(+). The protein operates within amino-acid biosynthesis; L-histidine biosynthesis; L-histidine from 5-phospho-alpha-D-ribose 1-diphosphate: step 5/9. Its function is as follows. IGPS catalyzes the conversion of PRFAR and glutamine to IGP, AICAR and glutamate. The HisH subunit catalyzes the hydrolysis of glutamine to glutamate and ammonia as part of the synthesis of IGP and AICAR. The resulting ammonia molecule is channeled to the active site of HisF. The sequence is that of Imidazole glycerol phosphate synthase subunit HisH from Geobacillus thermodenitrificans (strain NG80-2).